The sequence spans 368 residues: RNA polymerase sigma factor SigA (368 aa).

Residues 60–86 (VVDENGDPSEHSLKKDEKEAEKAQAED) are disordered. Basic and acidic residues predominate over residues 67-84 (PSEHSLKKDEKEAEKAQA). Residues 135-205 (LAEANLRLVV…TRAIADQART (71 aa)) form a sigma-70 factor domain-2 region. Residues 159–162 (DLIQ) carry the Interaction with polymerase core subunit RpoC motif. Residues 214–290 (ETINKLIRIQ…DQDATSPAEH (77 aa)) are sigma-70 factor domain-3. The tract at residues 303–356 (VLDTLTDREENVLRLRFGLDDGRTRTLEEVGKVFGVTRERIRQIEAKALRKLRH) is sigma-70 factor domain-4. The segment at residues 329 to 348 (LEEVGKVFGVTRERIRQIEA) is a DNA-binding region (H-T-H motif).

It belongs to the sigma-70 factor family. RpoD/SigA subfamily. In terms of assembly, interacts transiently with the RNA polymerase catalytic core.

The protein localises to the cytoplasm. Functionally, sigma factors are initiation factors that promote the attachment of RNA polymerase to specific initiation sites and are then released. This sigma factor is the primary sigma factor during exponential growth. This Enterococcus faecalis (strain ATCC 700802 / V583) protein is RNA polymerase sigma factor SigA.